The chain runs to 292 residues: MSKKPRQIAFYGKGGIGKSTTSQNTLAQLATTFGQKIMIVGCDPKADSTRLILNTKAQQTVLHLAAELGSVEDLELEDVVATGFGGILCVESGGPEPGVGCAGRGIITSINFLEEQGAYDGMDFISYDVLGDVVCGGFAMPIRENKAQEIYIVCSGEMMAMYAANNIARGILKYAQSGSVRLGGLICNSRKTDREDELITELARRLNTQMIHFVPRDNVVQHAELRRMTVTQYNPEHPQANEYKQLADKILHNEKLTIPTPIEMDELEQLLIDFGVVEDEETAIKKLEAAGH.

Residue 12–19 (GKGGIGKS) coordinates ATP. Position 101 (cysteine 101) interacts with [4Fe-4S] cluster. Arginine 104 bears the ADP-ribosylarginine; by dinitrogenase reductase ADP-ribosyltransferase mark. Cysteine 135 is a [4Fe-4S] cluster binding site.

This sequence belongs to the NifH/BchL/ChlL family. Homodimer. The cofactor is [4Fe-4S] cluster. In terms of processing, the reversible ADP-ribosylation of Arg-104 inactivates the nitrogenase reductase and regulates nitrogenase activity.

It catalyses the reaction N2 + 8 reduced [2Fe-2S]-[ferredoxin] + 16 ATP + 16 H2O = H2 + 8 oxidized [2Fe-2S]-[ferredoxin] + 2 NH4(+) + 16 ADP + 16 phosphate + 6 H(+). In terms of biological role, the key enzymatic reactions in nitrogen fixation are catalyzed by the nitrogenase complex, which has 2 components: the iron protein and the molybdenum-iron protein. In Paenibacillus durus (Paenibacillus azotofixans), this protein is Nitrogenase iron protein 1 (nifH1).